Consider the following 353-residue polypeptide: UDP-3-O-acylglucosamine N-acyltransferase (353 aa).

The active-site Proton acceptor is the H242.

This sequence belongs to the transferase hexapeptide repeat family. LpxD subfamily. Homotrimer.

It catalyses the reaction a UDP-3-O-[(3R)-3-hydroxyacyl]-alpha-D-glucosamine + a (3R)-hydroxyacyl-[ACP] = a UDP-2-N,3-O-bis[(3R)-3-hydroxyacyl]-alpha-D-glucosamine + holo-[ACP] + H(+). It functions in the pathway bacterial outer membrane biogenesis; LPS lipid A biosynthesis. Its function is as follows. Catalyzes the N-acylation of UDP-3-O-acylglucosamine using 3-hydroxyacyl-ACP as the acyl donor. Is involved in the biosynthesis of lipid A, a phosphorylated glycolipid that anchors the lipopolysaccharide to the outer membrane of the cell. The polypeptide is UDP-3-O-acylglucosamine N-acyltransferase (Pseudomonas paraeruginosa (strain DSM 24068 / PA7) (Pseudomonas aeruginosa (strain PA7))).